Reading from the N-terminus, the 958-residue chain is Coiled-coil domain-containing protein 33 (958 aa).

A C2 domain is found at 214-353; the sequence is SPEEPLIASQ…LVKPTESGKA (140 aa). Over residues 602–617 the composition is skewed to polar residues; sequence SKDTVSSTMDLSTSTP. Positions 602 to 628 are disordered; the sequence is SKDTVSSTMDLSTSTPREAEEEPLVPE. Coiled coils occupy residues 632–774 and 859–899; these read DTEM…LEDR and FNLL…RLQE. The disordered stretch occupies residues 899-958; sequence EQEKGFRHPSNSIIIEQPSALTHSMDLKQPSELEPLLPSSDSKLNKPLSPQKETANSQQT. Composition is skewed to polar residues over residues 907–920 and 949–958; these read PSNSIIIEQPSALT and QKETANSQQT.

The protein is Coiled-coil domain-containing protein 33 (CCDC33) of Homo sapiens (Human).